Reading from the N-terminus, the 355-residue chain is MPSLAEEICIGNLGSLQTLPESFTWKLTAADSLLRPSSAVSFDAVEESIPVIDLSNPDVTTLIGDASKTWGAFQIANHGISQKLLDDIESLSKTLFDMPSERKLEAASSDKGVSGYGEPRISPFFEKKMWSEGFTIADDSYRNHFNTLWPHDHTKYCGIIQEYVDEMEKLASRLLYCILGSLGVTVEDIEWAHKLEKSGSKVGRGAIRLNHYPVCPEPERAMGLAAHTDSTILTILHQSNTGGLQVFREESGWVTVEPAPGVLVVNIGDLFHILSNGKIPSVVHRAKVNHTRSRISIAYLWGGPAGDVQIAPISKLTGPAEPSLYRSITWKEYLQIKYEVFDKAMDAIRVVNPTN.

Residues 203–303 (GRGAIRLNHY…RISIAYLWGG (101 aa)) form the Fe2OG dioxygenase domain. The Fe cation site is built by His227, Asp229, and His284. Residue Arg294 is part of the active site.

The protein belongs to the iron/ascorbate-dependent oxidoreductase family. GA3OX subfamily. L-ascorbate is required as a cofactor. It depends on Fe cation as a cofactor. Expressed in siliques and in seeds, specifically at the rim of the embryo and the outer integument. Also expressed in flowers. Not detected in roots, stems and leaves.

The enzyme catalyses gibberellin A20 + 2-oxoglutarate + O2 = gibberellin A1 + succinate + CO2. It functions in the pathway plant hormone biosynthesis; gibberellin biosynthesis. Its function is as follows. Converts the inactive gibberellin (GA) precursors GA9 and GA20 in the bioactives gibberellins GA4 and GA1. Involved in the production of bioactive GA for reproductive development. The chain is Gibberellin 3-beta-dioxygenase 4 from Arabidopsis thaliana (Mouse-ear cress).